The primary structure comprises 320 residues: Cytochrome f (320 aa).

Residues methionine 1–alanine 35 form the signal peptide. Heme-binding residues include tyrosine 36, cysteine 56, cysteine 59, and histidine 60. The chain crosses the membrane as a helical span at residues valine 286–lysine 306.

Belongs to the cytochrome f family. In terms of assembly, the 4 large subunits of the cytochrome b6-f complex are cytochrome b6, subunit IV (17 kDa polypeptide, petD), cytochrome f and the Rieske protein, while the 4 small subunits are PetG, PetL, PetM and PetN. The complex functions as a dimer. The cofactor is heme.

It localises to the plastid. The protein localises to the chloroplast thylakoid membrane. In terms of biological role, component of the cytochrome b6-f complex, which mediates electron transfer between photosystem II (PSII) and photosystem I (PSI), cyclic electron flow around PSI, and state transitions. This Barbarea verna (Land cress) protein is Cytochrome f.